The following is a 647-amino-acid chain: Sialidase (647 aa).

The signal sequence occupies residues 1–37 (MTANPYLRRLPRRRAVSFLLAPALAAATVAGASPAQA). Arginine 68 is a binding site for substrate. Aspartate 92 functions as the Proton acceptor in the catalytic mechanism. BNR repeat units lie at residues 102 to 113 (RRSTDGGRTWGE), 175 to 186 (ATSTDGGLTWSH), and 239 to 250 (VYSDDHGRTWRA). Catalysis depends on glutamate 260, which acts as the Nucleophile. Arginine 276 is a substrate binding site. 2 BNR repeats span residues 287–298 (AVSTDGGHSYGP) and 348–359 (RMSCDDGQTWPV). The Nucleophile role is filled by tyrosine 370. One can recognise an F5/8 type C domain in the interval 496–646 (TFTVTVGLLD…AVAELEVEGQ (151 aa)).

Belongs to the glycosyl hydrolase 33 family.

The protein resides in the secreted. The enzyme catalyses Hydrolysis of alpha-(2-&gt;3)-, alpha-(2-&gt;6)-, alpha-(2-&gt;8)- glycosidic linkages of terminal sialic acid residues in oligosaccharides, glycoproteins, glycolipids, colominic acid and synthetic substrates.. In terms of biological role, to release sialic acids for use as carbon and energy sources for this non-pathogenic bacterium while in pathogenic microorganisms, sialidases have been suggested to be pathogenic factors. The sequence is that of Sialidase (nedA) from Micromonospora viridifaciens.